The sequence spans 263 residues: Indole-3-glycerol phosphate synthase (263 aa).

This sequence belongs to the TrpC family.

The catalysed reaction is 1-(2-carboxyphenylamino)-1-deoxy-D-ribulose 5-phosphate + H(+) = (1S,2R)-1-C-(indol-3-yl)glycerol 3-phosphate + CO2 + H2O. The protein operates within amino-acid biosynthesis; L-tryptophan biosynthesis; L-tryptophan from chorismate: step 4/5. The chain is Indole-3-glycerol phosphate synthase from Acidithiobacillus ferrooxidans (strain ATCC 23270 / DSM 14882 / CIP 104768 / NCIMB 8455) (Ferrobacillus ferrooxidans (strain ATCC 23270)).